We begin with the raw amino-acid sequence, 330 residues long: Solute-binding protein NAS141_03721 (330 aa).

The first 27 residues, 1–27, serve as a signal peptide directing secretion; the sequence is MSFFTKTAQLVSGAAVAATLFTATAQA. Alpha-D-mannuronate is bound by residues Glu-75, Asn-97, Arg-153, Arg-173, Tyr-196, 213 to 214, and Arg-240; that span reads NE. Alpha-D-taluronate is bound by residues Glu-75, Asn-97, Arg-153, Arg-173, Tyr-196, 213–214, and Arg-240; that span reads NE.

This sequence belongs to the bacterial solute-binding protein 7 family. In terms of assembly, the complex is comprised of an extracytoplasmic solute-binding protein and a heteromeric permease formed by two transmembrane proteins.

It is found in the periplasm. Solute-binding protein that binds D-mannuronate and D-taluronate (in vitro). Probably part of a tripartite ATP-independent periplasmic (TRAP) transport system that mediates solute transport into the cytoplasm. This Sulfitobacter sp. (strain NAS-14.1) protein is Solute-binding protein NAS141_03721.